Reading from the N-terminus, the 287-residue chain is Casein kinase II subunit beta-1 (287 aa).

The disordered stretch occupies residues 1 to 97 (MYRDRGTVNS…ESDVSGSDGE (97 aa)). Basic and acidic residues predominate over residues 13–25 (EVVDRKRINDALE). Residues 41-50 (GTVTAATTTA) show a composition bias toward low complexity. The span at 78–97 (SDDESDTDSEESDVSGSDGE) shows a compositional bias: acidic residues.

The protein belongs to the casein kinase 2 subunit beta family. Heterotetramer of two catalytic alpha subunits and two regulatory beta subunits. Interacts with CCA1. Interacts with LHY. Post-translationally, phosphorylated by alpha subunit.

The protein localises to the cytoplasm. The protein resides in the cytosol. It localises to the nucleus. Functionally, plays a complex role in regulating the basal catalytic activity of the alpha subunit. The tetrameric holoenzyme CK2, composed of two alpha and two beta subunits, phosphorylates the transcription factor GBFl, resulting in stimulation of its DNA binding activity. CK2 phosphorylates the transcription factor PIF1 after an exposure to light, resulting in a proteasome-dependent degradation of PIF1 and promotion of photomorphogenesis. CK2 phosphorylates translation initiation factors. May participate in the regulation of the initiation of translation. Stimulates the binding of CCA1 to promoters. This is Casein kinase II subunit beta-1 (CKB1) from Arabidopsis thaliana (Mouse-ear cress).